A 282-amino-acid polypeptide reads, in one-letter code: Globin-related protein glb-13 (282 aa).

Positions 1-46 (MGQENSKCPHQSLAEKRYKVERPKTKKVSSGSATERCLSTQSDEKN) are disordered. Over residues 13 to 23 (LAEKRYKVERP) the composition is skewed to basic and acidic residues. Polar residues predominate over residues 28 to 41 (VSSGSATERCLSTQ). The region spanning 100–249 (FLTRRERILL…IISFMRRGFD (150 aa)) is the Globin domain. Positions 162 and 194 each coordinate heme b.

Belongs to the globin family.

In terms of biological role, involved in oxidative stress resistance. The protein is Globin-related protein glb-13 of Caenorhabditis elegans.